Here is a 483-residue protein sequence, read N- to C-terminus: Cysteine proteinase 1, mitochondrial (483 aa).

The N-terminal 30 residues, 1-30, are a transit peptide targeting the mitochondrion; it reads MLPTSVSRSLYLKTFRSHLLRAPQIVLKRM. Residues Cys102, His398, and Asn421 contribute to the active site. Lys483 is a propeptide (removed in mature form; by autocatalysis).

It belongs to the peptidase C1 family. Homohexamer. Binds to nucleic acids. Binds single-stranded DNA and RNA with higher affinity than double-stranded DNA. In terms of processing, the N-terminus of isoform Cytoplasmic is blocked.

It localises to the mitochondrion. Its subcellular location is the cytoplasm. The enzyme catalyses Inactivates bleomycin B2 (a cytotoxic glycometallopeptide) by hydrolysis of a carboxyamide bond of beta-aminoalanine, but also shows general aminopeptidase activity. The specificity varies somewhat with source, but amino acid arylamides of Met, Leu and Ala are preferred.. Its activity is regulated as follows. Inhibited by E64, a specific inhibitor of cysteine proteases, N-ethylmaleimide, iodacetamide, and mercury and zinc ions. The normal physiological role of the enzyme is unknown, but it is not essential for the viability of yeast cells. Has aminopeptidase activity, shortening substrate peptides sequentially by 1 amino acid. Has bleomycin hydrolase activity, which can protect the cell from the toxic effects of bleomycin. Has homocysteine-thiolactonase activity, protecting the cell against homocysteine toxicity. Acts as a repressor in the GAL4 regulatory system, but this does not require either the peptidase or nucleic acid-binding activities. The chain is Cysteine proteinase 1, mitochondrial (LAP3) from Saccharomyces cerevisiae (strain AWRI1631) (Baker's yeast).